We begin with the raw amino-acid sequence, 118 residues long: Large ribosomal subunit protein bL20 (118 aa).

The protein belongs to the bacterial ribosomal protein bL20 family. In terms of assembly, part of the 50S ribosomal subunit. Contacts proteins L13 and L21.

Functionally, binds directly to 23S rRNA, probably serving to organize its structure. The polypeptide is Large ribosomal subunit protein bL20 (rplT) (Deinococcus radiodurans (strain ATCC 13939 / DSM 20539 / JCM 16871 / CCUG 27074 / LMG 4051 / NBRC 15346 / NCIMB 9279 / VKM B-1422 / R1)).